The sequence spans 252 residues: Indole-3-glycerol phosphate synthase (252 aa).

This sequence belongs to the TrpC family.

The enzyme catalyses 1-(2-carboxyphenylamino)-1-deoxy-D-ribulose 5-phosphate + H(+) = (1S,2R)-1-C-(indol-3-yl)glycerol 3-phosphate + CO2 + H2O. Its pathway is amino-acid biosynthesis; L-tryptophan biosynthesis; L-tryptophan from chorismate: step 4/5. This Listeria monocytogenes serotype 4b (strain CLIP80459) protein is Indole-3-glycerol phosphate synthase.